Consider the following 235-residue polypeptide: Alpha-S2-casein (235 aa).

The signal sequence occupies residues 1-15 (MKFFIFTCLLAVAFA). Phosphoserine occurs at positions 23, 24, 25, 28, 47, 72, 73, 74, 77, 147, 149, and 168. A compositionally biased stretch (polar residues) spans 144 to 158 (EELSTSEEPVSSSQE). The tract at residues 144–163 (EELSTSEEPVSSSQEENTKT) is disordered.

It belongs to the alpha-casein family. As to expression, mammary gland specific. Secreted in milk.

The protein resides in the secreted. Its function is as follows. Important role in the capacity of milk to transport calcium phosphate. The polypeptide is Alpha-S2-casein (CSN1S2) (Sus scrofa (Pig)).